We begin with the raw amino-acid sequence, 417 residues long: UDP-N-acetylglucosamine 1-carboxyvinyltransferase 2 (417 aa).

22–23 (KN) serves as a coordination point for phosphoenolpyruvate. Residue R92 participates in UDP-N-acetyl-alpha-D-glucosamine binding. Catalysis depends on C116, which acts as the Proton donor. C116 carries the post-translational modification 2-(S-cysteinyl)pyruvic acid O-phosphothioketal. UDP-N-acetyl-alpha-D-glucosamine contacts are provided by residues 121 to 125 (RPIDL), D305, and I327.

Belongs to the EPSP synthase family. MurA subfamily.

It is found in the cytoplasm. It carries out the reaction phosphoenolpyruvate + UDP-N-acetyl-alpha-D-glucosamine = UDP-N-acetyl-3-O-(1-carboxyvinyl)-alpha-D-glucosamine + phosphate. It functions in the pathway cell wall biogenesis; peptidoglycan biosynthesis. In terms of biological role, cell wall formation. Adds enolpyruvyl to UDP-N-acetylglucosamine. In Caldanaerobacter subterraneus subsp. tengcongensis (strain DSM 15242 / JCM 11007 / NBRC 100824 / MB4) (Thermoanaerobacter tengcongensis), this protein is UDP-N-acetylglucosamine 1-carboxyvinyltransferase 2.